Here is a 128-residue protein sequence, read N- to C-terminus: Orchestin (128 aa).

A signal peptide spans 1–20 (MNKVFIIGVCLFIVSQAVLA). Residues 23-95 (WDSDESSDER…DEDSDDSQES (73 aa)) form a disordered region. Basic and acidic residues-rich tracts occupy residues 30-49 (DERLSDRSDESREEPRKLVV) and 56-81 (EDSNESAEVRRRDDSRESEEEPRKLS). Acidic residues predominate over residues 84–93 (TSDEDSDDSQ).

In terms of processing, phosphorylated on Ser and Tyr residues. Calcium-binding activity is dependent on serine phosphorylation but not on tyrosine phosphorylation. Posterior caeca epithelium of the gut.

It localises to the secreted. In terms of biological role, plays a role in cuticle calcification. May induce precipitation of the calcium stored in the posterior caeca as calcium carbonate. In Cryptorchestia cavimana (Amphipod), this protein is Orchestin.